The primary structure comprises 487 residues: 26S proteasome non-ATPase regulatory subunit 3 homolog B (487 aa).

Residues 1–21 (MTQDVEMKDNQTPTQSVVSAP) form a disordered region. Residues 10 to 21 (NQTPTQSVVSAP) show a composition bias toward polar residues. A PCI domain is found at 239 to 420 (CRYLFYLGKI…GCMVSKETGD (182 aa)). The segment at 452–487 (PPNTHREKESEEKRREMKQQEEELAKYMAEEDDDDF) is disordered. The segment covering 455 to 480 (THREKESEEKRREMKQQEEELAKYMA) has biased composition (basic and acidic residues).

This sequence belongs to the proteasome subunit S3 family. In terms of assembly, component of the 19S regulatory particle (RP/PA700) lid subcomplex of the 26S proteasome. The 26S proteasome is composed of a core protease (CP), known as the 20S proteasome, capped at one or both ends by the 19S regulatory particle (RP/PA700). The RP/PA700 complex is composed of at least 17 different subunits in two subcomplexes, the base and the lid, which form the portions proximal and distal to the 20S proteolytic core, respectively. Interacts with UCH1 and UCH2. In terms of tissue distribution, preferentially expressed in flowers.

Its function is as follows. Acts as a regulatory subunit of the 26 proteasome which is involved in the ATP-dependent degradation of ubiquitinated proteins. In Arabidopsis thaliana (Mouse-ear cress), this protein is 26S proteasome non-ATPase regulatory subunit 3 homolog B.